Here is a 62-residue protein sequence, read N- to C-terminus: SPbeta prophage-derived uncharacterized protein YonU (62 aa).

Residues 1–32 (MEKKFLDAIQQLTKELEMLKKDIDSIKEATVR) adopt a coiled-coil conformation.

The protein is SPbeta prophage-derived uncharacterized protein YonU (yonU) of Bacillus subtilis (strain 168).